Consider the following 39-residue polypeptide: Gonadal protein gdl-ORF39 (39 aa).

As to expression, in bundles of maturing sperm of larval, pupal and adult males.

In Drosophila melanogaster (Fruit fly), this protein is Gonadal protein gdl-ORF39 (gdl-ORF39).